The primary structure comprises 551 residues: Chaperonin GroEL (551 aa).

Residues T29 to P32, K50, D86 to T90, G414, N478 to A480, and D494 contribute to the ATP site.

It belongs to the chaperonin (HSP60) family. Forms a cylinder of 14 subunits composed of two heptameric rings stacked back-to-back. Interacts with the co-chaperonin GroES.

It localises to the cytoplasm. The catalysed reaction is ATP + H2O + a folded polypeptide = ADP + phosphate + an unfolded polypeptide.. Together with its co-chaperonin GroES, plays an essential role in assisting protein folding. The GroEL-GroES system forms a nano-cage that allows encapsulation of the non-native substrate proteins and provides a physical environment optimized to promote and accelerate protein folding. The polypeptide is Chaperonin GroEL (Legionella jeonii).